Reading from the N-terminus, the 115-residue chain is NADH-ubiquinone oxidoreductase chain 3 (115 aa).

Transmembrane regions (helical) follow at residues 3-23, 55-75, and 87-107; these read IMITLFINMSLASLLVLIAFW, FFLVAITFLLFDLEIALLLPL, and MLTTALVLILLLALGLAYEWL.

The protein belongs to the complex I subunit 3 family. In terms of assembly, core subunit of respiratory chain NADH dehydrogenase (Complex I) which is composed of 45 different subunits. Interacts with TMEM186. Interacts with TMEM242.

Its subcellular location is the mitochondrion inner membrane. It catalyses the reaction a ubiquinone + NADH + 5 H(+)(in) = a ubiquinol + NAD(+) + 4 H(+)(out). In terms of biological role, core subunit of the mitochondrial membrane respiratory chain NADH dehydrogenase (Complex I) which catalyzes electron transfer from NADH through the respiratory chain, using ubiquinone as an electron acceptor. Essential for the catalytic activity of complex I. The sequence is that of NADH-ubiquinone oxidoreductase chain 3 from Dasypus novemcinctus (Nine-banded armadillo).